Reading from the N-terminus, the 733-residue chain is Ribosomal protein S6 kinase 2 alpha (733 aa).

Residues 18-38 (EDPENGHGSPEEGGRHTSKDE) are disordered. One can recognise a Protein kinase 1 domain in the interval 62 to 321 (FVLLKVLGQG…AEEIKRQPFF (260 aa)). Residues 68 to 76 (LGQGSFGKV) and Lys-94 each bind ATP. The active-site Proton acceptor is Asp-187. Ser-221 is subject to Phosphoserine. The 70-residue stretch at 322–391 (STIDWNKLFR…VAPALVEEDA (70 aa)) folds into the AGC-kinase C-terminal domain. The residue at position 359 (Thr-359) is a Phosphothreonine. Ser-363 carries the phosphoserine modification. At Ser-380 the chain carries Phosphoserine; by autocatalysis. The 258-residue stretch at 416–673 (YTVRETIGVG…AKQVLQHEWI (258 aa)) folds into the Protein kinase 2 domain. ATP contacts are provided by residues 422–430 (IGVGSYSVC) and Lys-445. Catalysis depends on Asp-533, which acts as the Proton acceptor. The residue at position 571 (Thr-571) is a Phosphothreonine. Ser-730 carries the post-translational modification Phosphoserine.

This sequence belongs to the protein kinase superfamily. AGC Ser/Thr protein kinase family. S6 kinase subfamily. Mg(2+) is required as a cofactor. In terms of processing, autophosphorylated on Ser-380, as part of the activation process.

The enzyme catalyses L-seryl-[protein] + ATP = O-phospho-L-seryl-[protein] + ADP + H(+). It catalyses the reaction L-threonyl-[protein] + ATP = O-phospho-L-threonyl-[protein] + ADP + H(+). With respect to regulation, activated by multiple phosphorylations on threonine and serine residues. In terms of biological role, serine/threonine kinase that may play a role in mediating the growth-factor and stress induced activation of transcription. This chain is Ribosomal protein S6 kinase 2 alpha (rps6ka), found in Xenopus laevis (African clawed frog).